Consider the following 692-residue polypeptide: Elongation factor G (692 aa).

The tr-type G domain occupies 9–283 (DKLRNIGIMA…AVIDYLPSPL (275 aa)). Residues 18–25 (AHIDAGKT), 82–86 (DTPGH), and 136–139 (NKMD) contribute to the GTP site.

Belongs to the TRAFAC class translation factor GTPase superfamily. Classic translation factor GTPase family. EF-G/EF-2 subfamily.

It localises to the cytoplasm. Catalyzes the GTP-dependent ribosomal translocation step during translation elongation. During this step, the ribosome changes from the pre-translocational (PRE) to the post-translocational (POST) state as the newly formed A-site-bound peptidyl-tRNA and P-site-bound deacylated tRNA move to the P and E sites, respectively. Catalyzes the coordinated movement of the two tRNA molecules, the mRNA and conformational changes in the ribosome. The chain is Elongation factor G (fusA) from Thermotoga maritima (strain ATCC 43589 / DSM 3109 / JCM 10099 / NBRC 100826 / MSB8).